Reading from the N-terminus, the 303-residue chain is MRLFNWRRQAVLNAMPLVKPDQVRTPWHEFWRRFRRQHMAMTAALFVILLIVVAIFARWIAPYDAENYFDYDNLNNGPSLQHWFGVDSLGRDIFSRVLVGAQISLAAGVFAVFIGAAIGTLLGLLAGYYEGWWDRLSMRICDVLFAFPGILLAIAVVAVLGSGIANVIIAVAIFSIPAFARLVRGNTLVLKQQTFIESARSIGASDMTILLRHILPGTVSSIVVFFTMRIGTSIISAASLSFLGLGAQPPTPEWGAMLNEARADMVIAPHVAVFPALAIFLTVLAFNLLGDGLRDALDPKIKG.

The next 6 helical transmembrane spans lie at 40 to 60, 105 to 125, 144 to 164, 165 to 185, 222 to 242, and 266 to 286; these read AMTAALFVILLIVVAIFARWI, LAAGVFAVFIGAAIGTLLGLL, LFAFPGILLAIAVVAVLGSGI, ANVIIAVAIFSIPAFARLVRG, IVVFFTMRIGTSIISAASLSF, and VIAPHVAVFPALAIFLTVLAF. In terms of domain architecture, ABC transmembrane type-1 spans 101–290; the sequence is AQISLAAGVF…LTVLAFNLLG (190 aa).

Belongs to the binding-protein-dependent transport system permease family. In terms of assembly, the complex is composed of two ATP-binding proteins (GsiA), two transmembrane proteins (GsiC and GsiD) and a solute-binding protein (GsiB).

It localises to the cell inner membrane. Its function is as follows. Part of the ABC transporter complex GsiABCD involved in glutathione import. Probably responsible for the translocation of the substrate across the membrane. The sequence is that of Glutathione transport system permease protein GsiD from Escherichia coli O1:K1 / APEC.